Here is a 424-residue protein sequence, read N- to C-terminus: F-box protein At2g38590 (424 aa).

The 46-residue stretch at 2–47 folds into the F-box domain; sequence TTMISNLPRVLIEEIFFRVPLKSLRAVRLTCKSWNTLSKSRSFRKL.

The protein is F-box protein At2g38590 of Arabidopsis thaliana (Mouse-ear cress).